Reading from the N-terminus, the 1003-residue chain is MPGKLRVHELAKQLGITSKELLATLKDKGEFVKTASSTIEPPVVKRMQEHYGSSGSDKSDTAAKPAAAKPAAPKPAASAAPKPGAPAKPAAPAAKPAPAAASAAKPGAAPKPGVQAKPAAAAKPGAPAKPAAPSAAKPGSAPKPAAAAKPAFSGPTPGDAAKKAEPAAKPGAEAPRPDGMPRPMGKPAPKPGARAPRVANNPFSTGGGERPAPRPGGGPRPGGGPRPGGGPRPQGQGRPGGQRDGQRDGQRDGQGNRGGQRQGAGAGGPRPQGGPRPQGGSRPQGGSAQGGSAKGAQGAPSQERQGGGRRPSPAMMPPTPGQMPAKAPGKGGRGGQAGGGAGGGFNRGGGTGGGAGRGGRRGGTAGAFGRPGGAPRRGRKSKRQKRNEYESMQAPNVIGGVRLPDGKGATIRLARGASLADFADKIGADAAALVQALFNLGEMVTATASVSDETLQLLGEEMNYKVQVVSPEDEDRELLESFDLQFGEDEGGEADLAKRPPVVTVMGHVDHGKTRLLDTIRKANVGSDEAGGITQGIGAYQVKVNVEDTERTITFLDTPGHEAFTAMRARGAKSTDIAVLVVAADDGVMPQTVEAINHAKAADVPIVVAVNKIDKPEASPEKIRGQLTEYGLIPEEYGGDTIFVDISAKQGLNIDELLASVCLTADAELDLVANPEMDAQGVAIEAHLDRGRGPVATVIVQRGTLRVGDSIVAGDTYGRVRRMVDEYGRDVEEAGPSRPVQVQGLNGVPGAGDNLLVVEDDRIARQIANQRNARKRNALAARSRKRVSLEDLDSVLKEHSTLNLILKGDNAGSVEALEEALLKIEMDDEVQLNIIDRGVGAVTQTNVTLAAASDAVIIAFNVRAEGKATEEANAEGVDVRYYTIIYRAIEEVEAALKGMLKPIYEERVIGHAEIRAIFKASSVGLIAGCMVEDGKVRRNATVRITRDGNVIAENAKIVSLRREKDDATEVSAGYECGMVLSYPDISVDDKIEVYEMVEVPREA.

The segment at 36 to 392 (SSTIEPPVVK…RQKRNEYESM (357 aa)) is disordered. The segment covering 62–151 (AAKPAAAKPA…PKPAAAAKPA (90 aa)) has biased composition (low complexity). Pro residues-rich tracts occupy residues 178–190 (DGMPRPMGKPAPK) and 213–230 (PRPGGGPRPGGGPRPGGG). Composition is skewed to gly residues over residues 231–243 (PRPQGQGRPGGQR) and 255–271 (GNRGGQRQGAGAGGPRP). Positions 273-286 (GGPRPQGGSRPQGG) are enriched in low complexity. Positions 329–372 (GKGGRGGQAGGGAGGGFNRGGGTGGGAGRGGRRGGTAGAFGRPG) are enriched in gly residues. Residues 376-385 (RRGRKSKRQK) are compositionally biased toward basic residues. A tr-type G domain is found at 498–670 (KRPPVVTVMG…VCLTADAELD (173 aa)). Residues 507-514 (GHVDHGKT) are G1. A GTP-binding site is contributed by 507–514 (GHVDHGKT). The interval 532-536 (GITQG) is G2. A G3 region spans residues 557–560 (DTPG). Residues 557 to 561 (DTPGH) and 611 to 614 (NKID) contribute to the GTP site. Residues 611–614 (NKID) are G4. The tract at residues 647–649 (SAK) is G5.

This sequence belongs to the TRAFAC class translation factor GTPase superfamily. Classic translation factor GTPase family. IF-2 subfamily.

The protein resides in the cytoplasm. One of the essential components for the initiation of protein synthesis. Protects formylmethionyl-tRNA from spontaneous hydrolysis and promotes its binding to the 30S ribosomal subunits. Also involved in the hydrolysis of GTP during the formation of the 70S ribosomal complex. This chain is Translation initiation factor IF-2, found in Corynebacterium glutamicum (strain R).